The chain runs to 507 residues: MTLAVMLQGTASDVGKSVLVAGLCRIFHQDGLRTAPFKSQNMALNSGITPDGKEMGRAQIFQAEAAGIAPDVRMNPILLKPTSDRQAQVVLMGQVATSMDAVSYHQYKPRLREQILAVYQSLAGEYEALVLEGAGSPAEINLRDRDIVNMGMAEMAQCPVILVADIDRGGVFAAIYGTLALLQPQERARVKGVIINKFRGDVALLRSGIEQIEALTGVPVLGVMPWLDVDLEDEDGVALQAGKYHRTDRRDIDIAVVHLPHIANFTDFNALAAQPDVRVRYVRDPQALADADLVILPGSKNTLGDLCWLRESGMAHAVEQARQRKVPLLGICGGYQMLGETIIDEVESGLGAQPGLGVLKTVTHFAQHKTTTQVQATLGSALPDWLADAAGLRVSGYEIHMGETRREAGCPPLLQLHKAGQAVDDGAISDDGLAFGTYLHGLFDSDAFTRALLNGLRQRKGLAPLDSALEYARYKTRQFDRLAEAMREHIAIDKIYAIMRQHQEPLC.

Residues Asp-251 to Phe-448 enclose the GATase cobBQ-type domain. The Nucleophile role is filled by Cys-332. Residue His-440 is part of the active site.

The protein belongs to the CobB/CobQ family. CobQ subfamily.

It participates in cofactor biosynthesis; adenosylcobalamin biosynthesis. Functionally, catalyzes amidations at positions B, D, E, and G on adenosylcobyrinic A,C-diamide. NH(2) groups are provided by glutamine, and one molecule of ATP is hydrogenolyzed for each amidation. In Klebsiella pneumoniae subsp. pneumoniae (strain ATCC 700721 / MGH 78578), this protein is Cobyric acid synthase.